The primary structure comprises 667 residues: Bifunctional polymyxin resistance protein ArnA (667 aa).

Residues 1–304 form a formyltransferase ArnAFT region; sequence MKAIVFAYHD…EMGIVTDVRL (304 aa). Residue H104 is the Proton donor; for formyltransferase activity of the active site. Residues R114 and 136-140 each bind (6R)-10-formyltetrahydrofolate; that span reads VKKAD. A dehydrogenase ArnADH region spans residues 314–667; sequence RRTRVLILGV…TAAPKDELNA (354 aa). NAD(+) contacts are provided by residues D347 and 368–369; that span reads DI. Residues A393, Y398, and 432–433 each bind UDP-alpha-D-glucuronate; that span reads TS. E434 functions as the Proton acceptor; for decarboxylase activity in the catalytic mechanism. Residues R460, N492, 526-535, and Y613 contribute to the UDP-alpha-D-glucuronate site; that span reads KLVDGGAQKR. The active-site Proton donor; for decarboxylase activity is R619.

In the N-terminal section; belongs to the Fmt family. UDP-L-Ara4N formyltransferase subfamily. This sequence in the C-terminal section; belongs to the NAD(P)-dependent epimerase/dehydratase family. UDP-glucuronic acid decarboxylase subfamily. As to quaternary structure, homohexamer, formed by a dimer of trimers.

It catalyses the reaction UDP-alpha-D-glucuronate + NAD(+) = UDP-beta-L-threo-pentopyranos-4-ulose + CO2 + NADH. The enzyme catalyses UDP-4-amino-4-deoxy-beta-L-arabinose + (6R)-10-formyltetrahydrofolate = UDP-4-deoxy-4-formamido-beta-L-arabinose + (6S)-5,6,7,8-tetrahydrofolate + H(+). It functions in the pathway nucleotide-sugar biosynthesis; UDP-4-deoxy-4-formamido-beta-L-arabinose biosynthesis; UDP-4-deoxy-4-formamido-beta-L-arabinose from UDP-alpha-D-glucuronate: step 1/3. The protein operates within nucleotide-sugar biosynthesis; UDP-4-deoxy-4-formamido-beta-L-arabinose biosynthesis; UDP-4-deoxy-4-formamido-beta-L-arabinose from UDP-alpha-D-glucuronate: step 3/3. Its pathway is bacterial outer membrane biogenesis; lipopolysaccharide biosynthesis. In terms of biological role, bifunctional enzyme that catalyzes the oxidative decarboxylation of UDP-glucuronic acid (UDP-GlcUA) to UDP-4-keto-arabinose (UDP-Ara4O) and the addition of a formyl group to UDP-4-amino-4-deoxy-L-arabinose (UDP-L-Ara4N) to form UDP-L-4-formamido-arabinose (UDP-L-Ara4FN). The modified arabinose is attached to lipid A and is required for resistance to polymyxin and cationic antimicrobial peptides. The protein is Bifunctional polymyxin resistance protein ArnA of Yersinia pestis bv. Antiqua (strain Antiqua).